We begin with the raw amino-acid sequence, 65 residues long: uncharacterized protein (65 aa).

Residues 37 to 57 (ILAIMTSVLPVLLIYIIWIFI) form a helical membrane-spanning segment.

The protein resides in the cell membrane. This is an uncharacterized protein from Bacillus subtilis (strain 168).